A 346-amino-acid chain; its full sequence is Annexin A1 (346 aa).

A2 carries the N-acetylalanine modification. S5 bears the Phosphoserine; by TRPM7 mark. Q19 is covalently cross-linked (Isoglutamyl lysine isopeptide (Gln-Lys) (interchain with K-?)). Phosphotyrosine is present on Y21. At S27 the chain carries Phosphoserine; by PKC. S34 and S37 each carry phosphoserine. Annexin repeat units follow at residues 42-113 (FNVS…AMLK), 114-185 (TPAQ…ALAK), 197-269 (DLAD…TIVK), and 273-344 (STPA…ALCG). Residue K58 is modified to N6-acetyllysine. Ca(2+) is bound by residues G59, V60, E62, R97, L100, E105, M127, G129, G131, T132, and E134. Residue T136 is modified to Phosphothreonine. Ca(2+) is bound by residues D171, G210, and R213. A Glycyl lysine isopeptide (Lys-Gly) (interchain with G-Cter in SUMO1); alternate cross-link involves residue K214. Residue K214 forms a Glycyl lysine isopeptide (Lys-Gly) (interchain with G-Cter in SUMO2); alternate linkage. G215, D253, E255, and L256 together coordinate Ca(2+). K257 is covalently cross-linked (Glycyl lysine isopeptide (Lys-Gly) (interchain with G-Cter in SUMO1)). Positions 261, 286, 288, and 290 each coordinate Ca(2+). Residue K312 is modified to N6-acetyllysine. Residues C324 and C343 are joined by a disulfide bond. Ca(2+) is bound by residues L328, E330, and T331. Residue K332 forms a Glycyl lysine isopeptide (Lys-Gly) (interchain with G-Cter in SUMO1) linkage. Residue E336 participates in Ca(2+) binding.

This sequence belongs to the annexin family. As to quaternary structure, homodimer; non-covalently linked. Homodimer; linked by transglutamylation. Homodimers linked by transglutamylation are observed in placenta, but not in other tissues. Interacts with S100A11. Heterotetramer, formed by two molecules each of S100A11 and ANXA1. Interacts with DYSF. Interacts with EGFR. Phosphorylated by protein kinase C, EGFR and TRPM7. Phosphorylated in response to EGF treatment. Post-translationally, sumoylated. In terms of processing, proteolytically cleaved by cathepsin CTSG to release the active N-terminal peptide Ac2-26. Detected in lung. Detected at the apical membrane of airway epithelial cells. Detected in intestinal epithelial cells. Detected in skeletal muscle. Detected in prostate. Detected in thymus (at protein level). Detected in stomach, lung, spleen, ovary and uterus, and at lower levels in kidney, thymus and heart.

It localises to the nucleus. The protein resides in the cytoplasm. The protein localises to the cell projection. Its subcellular location is the cilium. It is found in the basolateral cell membrane. It localises to the lateral cell membrane. The protein resides in the cell membrane. The protein localises to the apical cell membrane. Its subcellular location is the membrane. It is found in the early endosome. It localises to the cytoplasmic vesicle membrane. The protein resides in the endosome membrane. The protein localises to the secreted. Its subcellular location is the extracellular space. It is found in the extracellular exosome. It localises to the cytoplasmic vesicle. The protein resides in the secretory vesicle lumen. The protein localises to the phagocytic cup. Functionally, plays important roles in the innate immune response as effector of glucocorticoid-mediated responses and regulator of the inflammatory process. Has anti-inflammatory activity. Plays a role in glucocorticoid-mediated down-regulation of the early phase of the inflammatory response. Contributes to the adaptive immune response by enhancing signaling cascades that are triggered by T-cell activation, regulates differentiation and proliferation of activated T-cells. Promotes the differentiation of T-cells into Th1 cells and negatively regulates differentiation into Th2 cells. Has no effect on unstimulated T-cells. Negatively regulates hormone exocytosis via activation of the formyl peptide receptors and reorganization of the actin cytoskeleton. Has high affinity for Ca(2+) and can bind up to eight Ca(2+) ions. Displays Ca(2+)-dependent binding to phospholipid membranes. Plays a role in the formation of phagocytic cups and phagosomes. Plays a role in phagocytosis by mediating the Ca(2+)-dependent interaction between phagosomes and the actin cytoskeleton. Its function is as follows. Functions at least in part by activating the formyl peptide receptors and downstream signaling cascades. Promotes chemotaxis of granulocytes and monocytes via activation of the formyl peptide receptors. Promotes rearrangement of the actin cytoskeleton, cell polarization and cell migration. Promotes resolution of inflammation and wound healing. Acts via neutrophil N-formyl peptide receptors to enhance the release of CXCL2. This chain is Annexin A1 (Anxa1), found in Mus musculus (Mouse).